The sequence spans 697 residues: Elongation factor G (697 aa).

One can recognise a tr-type G domain in the interval 8-290 (ERYRNIGISA…AVLDFLPSPV (283 aa)). GTP is bound by residues 17-24 (AHIDAGKT), 88-92 (DTPGH), and 142-145 (NKMD).

Belongs to the TRAFAC class translation factor GTPase superfamily. Classic translation factor GTPase family. EF-G/EF-2 subfamily.

The protein resides in the cytoplasm. In terms of biological role, catalyzes the GTP-dependent ribosomal translocation step during translation elongation. During this step, the ribosome changes from the pre-translocational (PRE) to the post-translocational (POST) state as the newly formed A-site-bound peptidyl-tRNA and P-site-bound deacylated tRNA move to the P and E sites, respectively. Catalyzes the coordinated movement of the two tRNA molecules, the mRNA and conformational changes in the ribosome. The polypeptide is Elongation factor G (Methylobacillus flagellatus (strain ATCC 51484 / DSM 6875 / VKM B-1610 / KT)).